A 462-amino-acid chain; its full sequence is Trigger factor (462 aa).

Residues 163 to 248 (GDEVLFDFKG…LKEVRRVNSL (86 aa)) enclose the PPIase FKBP-type domain. The segment at 442–462 (SMQEKQTQEPAEEKVETKEEK) is disordered. Residues 452–462 (AEEKVETKEEK) show a composition bias toward basic and acidic residues.

The protein belongs to the FKBP-type PPIase family. Tig subfamily.

Its subcellular location is the cytoplasm. It carries out the reaction [protein]-peptidylproline (omega=180) = [protein]-peptidylproline (omega=0). Its function is as follows. Involved in protein export. Acts as a chaperone by maintaining the newly synthesized protein in an open conformation. Functions as a peptidyl-prolyl cis-trans isomerase. This chain is Trigger factor, found in Mycoplasmopsis synoviae (strain 53) (Mycoplasma synoviae).